Reading from the N-terminus, the 194-residue chain is Large ribosomal subunit protein uL24c (194 aa).

A chloroplast-targeting transit peptide spans 1–50 (MVAMAMASLQSSMSSLSLSSNSFLGQPLSPITLSPFLQGKPTEKKCLIVM).

This sequence belongs to the universal ribosomal protein uL24 family. In terms of assembly, part of the 50S ribosomal subunit.

It localises to the plastid. The protein resides in the chloroplast. Its function is as follows. One of two assembly initiator proteins, it binds directly to the 5'-end of the 23S rRNA, where it nucleates assembly of the 50S subunit. The chain is Large ribosomal subunit protein uL24c (RPL24) from Pisum sativum (Garden pea).